The chain runs to 736 residues: Dynamin-1-like protein (736 aa).

M1 carries the post-translational modification N-acetylmethionine. A Dynamin-type G domain is found at 22–302 (IIQLPQIVVV…LMHHIRDCLP (281 aa)). A G1 motif region spans residues 32–39 (GTQSSGKS). GTP is bound at residue 32–40 (GTQSSGKSS). Positions 58–60 (VTR) are G2 motif. The G3 motif stretch occupies residues 146-149 (DLPG). The tract at residues 215–218 (TKLD) is G4 motif. GTP is bound by residues 215–221 (TKLDLMD) and 246–249 (NRSQ). A G5 motif region spans residues 245 to 248 (VNRS). The interval 344–489 (YCNTIEGTAK…NEMVHNLVAI (146 aa)) is middle domain. The tract at residues 448–685 (NYSTQELLRF…NHVKDTLQSE (238 aa)) is interaction with GSK3B. The segment at 502–569 (ADACGLMNNN…IQDNRRETKN (68 aa)) is b domain. The disordered stretch occupies residues 522–554 (RELPSAGSRDKSSKVPSALAPASQEPPPAASAE). S529 is modified (phosphoserine). Residues K532, K535, K558, and K568 each participate in a glycyl lysine isopeptide (Lys-Gly) (interchain with G-Cter in SUMO) cross-link. Residues 542–736 (PASQEPPPAA…IAEIRETHLW (195 aa)) are C-terminal dimerization domain. The segment at 566 to 588 (ETKNVPSAGGGIGDGGQEPTTGN) is disordered. O-linked (GlcNAc) threonine glycans are attached at residues T585 and T586. K594 participates in a covalent cross-link: Glycyl lysine isopeptide (Lys-Gly) (interchain with G-Cter in SUMO). The residue at position 597 (K597) is an N6-acetyllysine; alternate. Residue K597 forms a Glycyl lysine isopeptide (Lys-Gly) (interchain with G-Cter in SUMO); alternate linkage. Residue K606 forms a Glycyl lysine isopeptide (Lys-Gly) (interchain with G-Cter in SUMO) linkage. S607 is subject to Phosphoserine. K608 participates in a covalent cross-link: Glycyl lysine isopeptide (Lys-Gly) (interchain with G-Cter in SUMO). S616 carries the post-translational modification Phosphoserine; by PINK1. At S637 the chain carries Phosphoserine; by CAMK1 and PKA. At C644 the chain carries S-nitrosocysteine. In terms of domain architecture, GED spans 644-735 (CEVIERLIKS…IIAEIRETHL (92 aa)). An important for homodimerization region spans residues 654-668 (YFLIVRKNIQDSVPK).

This sequence belongs to the TRAFAC class dynamin-like GTPase superfamily. Dynamin/Fzo/YdjA family. As to quaternary structure, homotetramer; dimerizes through the N-terminal GTP-middle region of one molecule binding to the GED domain of another DNM1L molecule. Oligomerizes in a GTP-dependent manner to form membrane-associated tubules with a spiral pattern. Interacts with GSK3B and MARCHF5. Interacts (via the GTPase and B domains) with UBE2I; the interaction promotes sumoylation of DNM1L, mainly in its B domain. Interacts with PPP3CA; the interaction dephosphorylates DNM1L and regulates its transition to mitochondria. Interacts with BCL2L1 isoform BCL-X(L) and CLTA; DNM1L and BCL2L1 isoform BCL-X(L) may form a complex in synaptic vesicles that also contains clathrin and MFF. Interacts with MFF; the interaction is inhibited by C11orf65/MFI. Interacts with FIS1. Interacts with MIEF2 and MIEF1; GTP-dependent, regulates GTP hydrolysis and DNM1L oligomerization. Interacts with PGAM5; this interaction leads to dephosphorylation at Ser-656 and activation of GTPase activity and eventually to mitochondria fragmentation. Interacts with RALBP1; during mitosis, recruits DNM1L to the mitochondrion and mediates its activation by the mitotic kinase cyclin B-CDK1. Interacts with FUNDC1; this interaction recruits DNM1L/DRP1 at ER-mitochondria contact sites. Phosphorylation/dephosphorylation events on two sites near the GED domain regulate mitochondrial fission. Phosphorylation on Ser-637 inhibits mitochondrial fission probably through preventing intramolecular interaction. Dephosphorylated on this site by PPP3CA which promotes mitochondrial fission. Phosphorylation on Ser-616 by Pink1 activates the GTPase activity and promotes mitochondrial fission. Phosphorylated in a circadian manner at Ser-637. Dephosphorylated by PGAM5. In terms of processing, sumoylated on various lysine residues within the B domain, probably by MUL1. Sumoylation positively regulates mitochondrial fission. Desumoylated by SENP5 during G2/M transition of mitosis. Appears to be linked to its catalytic activity. Post-translationally, S-nitrosylation increases DNM1L dimerization, mitochondrial fission and causes neuronal damage. O-GlcNAcylation augments the level of the GTP-bound active form of DNM1L and induces translocation from the cytoplasm to mitochondria in cardiomyocytes. It also decreases phosphorylation at Ser-637. In terms of processing, ubiquitination by MARCHF5 affects mitochondrial morphology. In terms of tissue distribution, expressed in the cerebellum and in several regions of the cerebrum and diencephalon. Strongly expressed in the cerebellar Purkinje cells and in the pontile giant neurons. As to expression, widely expressed. Brain-specific. In terms of tissue distribution, brain-specific (at protein level). Expressed in most of the subregions of the brain, including the cerebellum, midbrain, hippocampus, striatum, cerebral cortex, and brain stem. Weakly expressed in the olfactory bulb.

Its subcellular location is the cytoplasm. It localises to the cytosol. It is found in the golgi apparatus. The protein localises to the endomembrane system. The protein resides in the mitochondrion outer membrane. Its subcellular location is the peroxisome. It localises to the membrane. It is found in the clathrin-coated pit. The protein localises to the cytoplasmic vesicle. The protein resides in the secretory vesicle. Its subcellular location is the synaptic vesicle membrane. It localises to the lysosome. It is found in the late endosome. The protein localises to the cell membrane. The protein resides in the postsynaptic density. The catalysed reaction is GTP + H2O = GDP + phosphate + H(+). Functionally, functions in mitochondrial and peroxisomal division. Mediates membrane fission through oligomerization into membrane-associated tubular structures that wrap around the scission site to constrict and sever the mitochondrial membrane through a GTP hydrolysis-dependent mechanism. The specific recruitment at scission sites is mediated by membrane receptors like MFF, MIEF1 and MIEF2 for mitochondrial membranes. While the recruitment by the membrane receptors is GTP-dependent, the following hydrolysis of GTP induces the dissociation from the receptors and allows DNM1L filaments to curl into closed rings that are probably sufficient to sever a double membrane. Acts downstream of PINK1 to promote mitochondrial fission in a PRKN-dependent manner. Plays an important role in mitochondrial fission during mitosis. Required for formation of endocytic vesicles. Through its function in mitochondrial division, ensures the survival of at least some types of postmitotic neurons, including Purkinje cells, by suppressing oxidative damage. Required for normal brain development, including that of cerebellum. Facilitates developmentally regulated apoptosis during neural tube formation. Required for a normal rate of cytochrome c release and caspase activation during apoptosis; this requirement may depend upon the cell type and the physiological apoptotic cues. Proposed to regulate synaptic vesicle membrane dynamics through association with BCL2L1 isoform Bcl-X(L) which stimulates its GTPase activity in synaptic vesicles; the function may require its recruitment by MFF to clathrin-containing vesicles. Required for programmed necrosis execution. Rhythmic control of its activity following phosphorylation at Ser-637 is essential for the circadian control of mitochondrial ATP production. Regulates postsynaptic clathrin-mediated endocytosis by positioning the endocytic zone at the postsynaptic density, independently of mitochondrial division. The protein is Dynamin-1-like protein of Mus musculus (Mouse).